The sequence spans 119 residues: Large ribosomal subunit protein uL24 (119 aa).

The protein belongs to the universal ribosomal protein uL24 family. Part of the 50S ribosomal subunit.

One of two assembly initiator proteins, it binds directly to the 5'-end of the 23S rRNA, where it nucleates assembly of the 50S subunit. In terms of biological role, one of the proteins that surrounds the polypeptide exit tunnel on the outside of the subunit. The protein is Large ribosomal subunit protein uL24 of Arthrobacter sp. (strain FB24).